Consider the following 305-residue polypeptide: Ribonuclease Z (305 aa).

Residues His-61, His-63, Asp-65, His-66, His-138, Asp-208, and His-266 each coordinate Zn(2+). Asp-65 functions as the Proton acceptor in the catalytic mechanism.

It belongs to the RNase Z family. As to quaternary structure, homodimer. Requires Zn(2+) as cofactor.

It catalyses the reaction Endonucleolytic cleavage of RNA, removing extra 3' nucleotides from tRNA precursor, generating 3' termini of tRNAs. A 3'-hydroxy group is left at the tRNA terminus and a 5'-phosphoryl group is left at the trailer molecule.. In terms of biological role, zinc phosphodiesterase, which displays some tRNA 3'-processing endonuclease activity. Probably involved in tRNA maturation, by removing a 3'-trailer from precursor tRNA. The protein is Ribonuclease Z of Methanosarcina mazei (strain ATCC BAA-159 / DSM 3647 / Goe1 / Go1 / JCM 11833 / OCM 88) (Methanosarcina frisia).